The primary structure comprises 414 residues: Esterase FrsA (414 aa).

This sequence belongs to the FrsA family.

The catalysed reaction is a carboxylic ester + H2O = an alcohol + a carboxylate + H(+). Functionally, catalyzes the hydrolysis of esters. This Escherichia coli O8 (strain IAI1) protein is Esterase FrsA.